The sequence spans 220 residues: Protein-L-isoaspartate O-methyltransferase (220 aa).

The active site involves Ser68.

This sequence belongs to the methyltransferase superfamily. L-isoaspartyl/D-aspartyl protein methyltransferase family.

It localises to the cytoplasm. The enzyme catalyses [protein]-L-isoaspartate + S-adenosyl-L-methionine = [protein]-L-isoaspartate alpha-methyl ester + S-adenosyl-L-homocysteine. Functionally, catalyzes the methyl esterification of L-isoaspartyl residues in peptides and proteins that result from spontaneous decomposition of normal L-aspartyl and L-asparaginyl residues. It plays a role in the repair and/or degradation of damaged proteins. In Dictyoglomus turgidum (strain DSM 6724 / Z-1310), this protein is Protein-L-isoaspartate O-methyltransferase.